The primary structure comprises 386 residues: Mannitol-1-phosphate 5-dehydrogenase (386 aa).

NAD(+) is bound at residue 3 to 14 (AVHFGAGNIGRG).

It belongs to the mannitol dehydrogenase family.

It carries out the reaction D-mannitol 1-phosphate + NAD(+) = beta-D-fructose 6-phosphate + NADH + H(+). In Brevibacillus brevis (strain 47 / JCM 6285 / NBRC 100599), this protein is Mannitol-1-phosphate 5-dehydrogenase.